Reading from the N-terminus, the 91-residue chain is Chorion class B protein M3A5 (91 aa).

The tract at residues 1–51 is central domain; that stretch reads VASENRYEGTVGVSGNLPFLGTADVAGEFPTAGIGEILYGCGNGAVGITRE. A right arm (Gly-rich tandem repeats) region spans residues 52 to 91; it reads GGLGYGAGYGGGYGLGYGGYGGGYGLGYGGYGGCGCGCGY.

This sequence belongs to the chorion protein family.

Functionally, this protein is one of many from the eggshell of the silk moth. The sequence is that of Chorion class B protein M3A5 from Bombyx mori (Silk moth).